Here is a 108-residue protein sequence, read N- to C-terminus: Anti-sigma-B factor antagonist (108 aa).

An STAS domain is found at 3-108 (LNIETTTQDK…MHVNEGTEVE (106 aa)). Residue serine 57 is modified to Phosphoserine.

This sequence belongs to the anti-sigma-factor antagonist family. In terms of processing, phosphorylated by RsbW on a serine residue.

Positive regulator of sigma-B activity. Non-phosphorylated RsbV binds to RsbW, preventing its association with sigma-B. When phosphorylated, releases RsbW, which is then free to complex with and inactivate sigma-B. The sequence is that of Anti-sigma-B factor antagonist (rsbV) from Staphylococcus aureus (strain NCTC 8325 / PS 47).